The primary structure comprises 334 residues: GTPase Obg (334 aa).

The Obg domain occupies 1 to 159; the sequence is MRFVDEVVIK…KEVRLELNLL (159 aa). One can recognise an OBG-type G domain in the interval 160 to 331; sequence ADVALLGLPN…LAKKLNEFLQ (172 aa). Residues 166–173, 191–195, 212–215, 282–285, and 312–314 each bind GTP; these read GLPNAGKS, FTTMY, DIPG, NKID, and SAA. Mg(2+) contacts are provided by Ser173 and Thr193.

It belongs to the TRAFAC class OBG-HflX-like GTPase superfamily. OBG GTPase family. Monomer. It depends on Mg(2+) as a cofactor.

The protein resides in the cytoplasm. Functionally, an essential GTPase which binds GTP, GDP and possibly (p)ppGpp with moderate affinity, with high nucleotide exchange rates and a fairly low GTP hydrolysis rate. Plays a role in control of the cell cycle, stress response, ribosome biogenesis and in those bacteria that undergo differentiation, in morphogenesis control. The protein is GTPase Obg of Francisella tularensis subsp. tularensis (strain WY96-3418).